We begin with the raw amino-acid sequence, 306 residues long: Recombination-associated protein RdgC (306 aa).

The protein belongs to the RdgC family.

The protein localises to the cytoplasm. It is found in the nucleoid. Its function is as follows. May be involved in recombination. The chain is Recombination-associated protein RdgC from Burkholderia ambifaria (strain MC40-6).